The sequence spans 405 residues: NADH-quinone oxidoreductase subunit D (405 aa).

Belongs to the complex I 49 kDa subunit family. NDH-1 is composed of 14 different subunits. Subunits NuoB, C, D, E, F, and G constitute the peripheral sector of the complex.

Its subcellular location is the cell inner membrane. It carries out the reaction a quinone + NADH + 5 H(+)(in) = a quinol + NAD(+) + 4 H(+)(out). NDH-1 shuttles electrons from NADH, via FMN and iron-sulfur (Fe-S) centers, to quinones in the respiratory chain. The immediate electron acceptor for the enzyme in this species is believed to be ubiquinone. Couples the redox reaction to proton translocation (for every two electrons transferred, four hydrogen ions are translocated across the cytoplasmic membrane), and thus conserves the redox energy in a proton gradient. This is NADH-quinone oxidoreductase subunit D from Ruegeria pomeroyi (strain ATCC 700808 / DSM 15171 / DSS-3) (Silicibacter pomeroyi).